The following is a 246-amino-acid chain: Metallo-beta-lactamase type 2 (246 aa).

Residues 1-20 form the signal peptide; it reads MKKLFVLCVCFFCSITAAGA. His-95, His-97, Asp-99, His-157, and Cys-176 together coordinate Zn(2+). Asp-99 serves as a coordination point for a beta-lactam. A beta-lactam-binding residues include Lys-179 and Asn-185. His-215 contacts Zn(2+).

It belongs to the metallo-beta-lactamase superfamily. Class-B beta-lactamase family. As to quaternary structure, monomer. Zn(2+) serves as cofactor.

It localises to the periplasm. The enzyme catalyses a beta-lactam + H2O = a substituted beta-amino acid. In terms of biological role, confers resistance to the different beta-lactam antibiotics (penicillin, cephalosporin and carbapenem) via the hydrolysis of the beta-lactam ring. Exhibits higher catalytic efficiency toward ticarcillin and piperacillin than blaIMP-1. Exhibits catalytic activity for carbapenem compounds, but has a preference for imipenem and ertapenem over meropenem. Has high efficiency for the hydrolysis of cefuroxime. Exhibits hydrolysis of all cephalosporins tested. Exhibits no hydrolysis of temocillin, the 6-alpha-methoxy semisynthetic derivative of ticarcillin. The protein is Metallo-beta-lactamase type 2 of Pseudomonas aeruginosa.